We begin with the raw amino-acid sequence, 174 residues long: Large ribosomal subunit protein uL10 (174 aa).

This sequence belongs to the universal ribosomal protein uL10 family. As to quaternary structure, part of the ribosomal stalk of the 50S ribosomal subunit. The N-terminus interacts with L11 and the large rRNA to form the base of the stalk. The C-terminus forms an elongated spine to which L12 dimers bind in a sequential fashion forming a multimeric L10(L12)X complex.

Its function is as follows. Forms part of the ribosomal stalk, playing a central role in the interaction of the ribosome with GTP-bound translation factors. This Verminephrobacter eiseniae (strain EF01-2) protein is Large ribosomal subunit protein uL10.